The chain runs to 156 residues: Transcription elongation factor GreA 1 (156 aa).

Residues 43 to 74 (RSENAEYSSAKRDLGRLESRLRYLNKQLQYAQ) are a coiled coil.

This sequence belongs to the GreA/GreB family.

Functionally, necessary for efficient RNA polymerase transcription elongation past template-encoded arresting sites. The arresting sites in DNA have the property of trapping a certain fraction of elongating RNA polymerases that pass through, resulting in locked ternary complexes. Cleavage of the nascent transcript by cleavage factors such as GreA or GreB allows the resumption of elongation from the new 3'terminus. GreA releases sequences of 2 to 3 nucleotides. The polypeptide is Transcription elongation factor GreA 1 (Lactiplantibacillus plantarum (strain ATCC BAA-793 / NCIMB 8826 / WCFS1) (Lactobacillus plantarum)).